We begin with the raw amino-acid sequence, 143 residues long: Hemoglobin cathodic subunit alpha (143 aa).

Serine 2 is modified (N-acetylserine). The region spanning 2–143 (SLTAKDKSLI…LGAALSDKYR (142 aa)) is the Globin domain. O2 is bound at residue histidine 60. Histidine 89 contacts heme b.

This sequence belongs to the globin family. As to quaternary structure, heterotetramer of two alpha chains and two beta chains. As to expression, red blood cells.

Involved in oxygen transport from gills to the various peripheral tissues. The sequence is that of Hemoglobin cathodic subunit alpha from Anguilla anguilla (European freshwater eel).